We begin with the raw amino-acid sequence, 616 residues long: Methionine--tRNA ligase, chloroplastic/mitochondrial (616 aa).

The 'HIGH' region signature appears at 78-88; that stretch reads YYVNAPPHMGS. The short motif at 366–370 is the 'KMSKS' region element; sequence KMGKS. Lys-369 lines the ATP pocket. The segment covering 582 to 593 has biased composition (basic and acidic residues); the sequence is LNPEKEEDEKKP. Residues 582–602 are disordered; the sequence is LNPEKEEDEKKPKVGKKTGKA.

This sequence belongs to the class-I aminoacyl-tRNA synthetase family.

The protein resides in the plastid. It is found in the chloroplast. Its subcellular location is the mitochondrion. The catalysed reaction is tRNA(Met) + L-methionine + ATP = L-methionyl-tRNA(Met) + AMP + diphosphate. This chain is Methionine--tRNA ligase, chloroplastic/mitochondrial, found in Arabidopsis thaliana (Mouse-ear cress).